The primary structure comprises 729 residues: Fatty acid oxidation complex subunit alpha (729 aa).

The interval 1–189 is enoyl-CoA hydratase/isomerase; it reads MLYKGDTLYL…KIGLVDGVVK (189 aa). A substrate-binding site is contributed by D296. The tract at residues 311-729 is 3-hydroxyacyl-CoA dehydrogenase; the sequence is ETPKQAAVLG…ARPVGSLKTA (419 aa). Residues M324, D343, 400 to 402, K407, and S429 each bind NAD(+); that span reads VVE. H450 serves as the catalytic For 3-hydroxyacyl-CoA dehydrogenase activity. Residue N453 coordinates NAD(+). N500 and Y660 together coordinate substrate. The interval 708–729 is disordered; it reads RHNEPYYPPVEPARPVGSLKTA.

It in the N-terminal section; belongs to the enoyl-CoA hydratase/isomerase family. In the C-terminal section; belongs to the 3-hydroxyacyl-CoA dehydrogenase family. As to quaternary structure, heterotetramer of two alpha chains (FadB) and two beta chains (FadA).

It catalyses the reaction a (3S)-3-hydroxyacyl-CoA + NAD(+) = a 3-oxoacyl-CoA + NADH + H(+). The catalysed reaction is a (3S)-3-hydroxyacyl-CoA = a (2E)-enoyl-CoA + H2O. The enzyme catalyses a 4-saturated-(3S)-3-hydroxyacyl-CoA = a (3E)-enoyl-CoA + H2O. It carries out the reaction (3S)-3-hydroxybutanoyl-CoA = (3R)-3-hydroxybutanoyl-CoA. It catalyses the reaction a (3Z)-enoyl-CoA = a 4-saturated (2E)-enoyl-CoA. The catalysed reaction is a (3E)-enoyl-CoA = a 4-saturated (2E)-enoyl-CoA. It participates in lipid metabolism; fatty acid beta-oxidation. Its function is as follows. Involved in the aerobic and anaerobic degradation of long-chain fatty acids via beta-oxidation cycle. Catalyzes the formation of 3-oxoacyl-CoA from enoyl-CoA via L-3-hydroxyacyl-CoA. It can also use D-3-hydroxyacyl-CoA and cis-3-enoyl-CoA as substrate. In Salmonella schwarzengrund (strain CVM19633), this protein is Fatty acid oxidation complex subunit alpha.